Consider the following 448-residue polypeptide: Biotin carboxylase (448 aa).

One can recognise a Biotin carboxylation domain in the interval 1–445 (MLEKVVIANR…NIHYLEKKLG (445 aa)). Residues Lys-116, Lys-159, 165–166 (GG), 201–204 (EKYL), His-209, and His-236 contribute to the ATP site. Residues 120–317 (IKAMKKAGVP…LVKEQLRIAA (198 aa)) form the ATP-grasp domain. Lys-238 lines the hydrogencarbonate pocket. Glu-276 and Glu-288 together coordinate ATP. Positions 276, 288, and 290 each coordinate Mg(2+). 3 residues coordinate Mn(2+): Glu-276, Glu-288, and Asn-290. Residues Arg-292, Val-295, and Arg-338 each coordinate hydrogencarbonate. Arg-292 is an active-site residue. Arg-338 contacts biotin.

Acetyl-CoA carboxylase is a heterohexamer of biotin carboxyl carrier protein, biotin carboxylase and the two subunits of carboxyl transferase in a 2:2 complex. Requires Mg(2+) as cofactor. It depends on Mn(2+) as a cofactor.

The catalysed reaction is N(6)-biotinyl-L-lysyl-[protein] + hydrogencarbonate + ATP = N(6)-carboxybiotinyl-L-lysyl-[protein] + ADP + phosphate + H(+). The protein operates within lipid metabolism; malonyl-CoA biosynthesis; malonyl-CoA from acetyl-CoA: step 1/1. In terms of biological role, this protein is a component of the acetyl coenzyme A carboxylase complex; first, biotin carboxylase catalyzes the carboxylation of the carrier protein and then the transcarboxylase transfers the carboxyl group to form malonyl-CoA. In Haemophilus influenzae (strain ATCC 51907 / DSM 11121 / KW20 / Rd), this protein is Biotin carboxylase (accC).